Reading from the N-terminus, the 66-residue chain is Sodium channel alpha-toxin Acra8 (66 aa).

Residues 2–64 (RDGYIVDDKN…VPIKEKGRCN (63 aa)) form the LCN-type CS-alpha/beta domain. Disulfide bonds link C12–C63, C16–C36, C22–C46, and C26–C48. The residue at position 64 (N64) is an Asparagine amide. A propeptide spanning residues 65–66 (GR) is cleaved from the precursor.

Belongs to the long (4 C-C) scorpion toxin superfamily. Sodium channel inhibitor family. Alpha subfamily. As to expression, expressed by the venom gland.

Its subcellular location is the secreted. In terms of biological role, alpha toxins bind voltage-independently at site-3 of sodium channels (Nav) and inhibit the inactivation of the activated channels, thereby blocking neuronal transmission. The protein is Sodium channel alpha-toxin Acra8 of Androctonus crassicauda (Arabian fat-tailed scorpion).